The sequence spans 652 residues: Neuroendocrine convertase 2 (652 aa).

An N-terminal signal peptide occupies residues 1 to 22 (MKNTHVDLICVFLSIFIGIGEA). Residues 23–107 (VDVYTNHFHV…QLKGYTRTKR (85 aa)) constitute a propeptide that is removed on maturation. Residues 136–481 (QWYLKNTGQA…FGVLDAAEMV (346 aa)) enclose the Peptidase S8 domain. N-linked (GlcNAc...) asparagine glycosylation is present at Asn-167. Residues Asp-174 and His-215 each act as charge relay system in the active site. 2 cysteine pairs are disulfide-bonded: Cys-232–Cys-382 and Cys-324–Cys-354. The N-linked (GlcNAc...) asparagine glycan is linked to Asn-290. The active-site Charge relay system is the Ser-390. N-linked (GlcNAc...) asparagine glycosylation is present at Asn-451. Residues 489 to 625 (TSPPRYHCTA…ELMLHGTREA (137 aa)) enclose the P/Homo B domain. A disulfide bridge connects residues Cys-496 and Cys-522. The tract at residues 501–652 (IDTPHEIPAD…TVQKAHKRSH (152 aa)) is required for ubiquitination-mediated degradation. Asn-542 is a glycosylation site (N-linked (GlcNAc...) asparagine).

Belongs to the peptidase S8 family. Furin subfamily. Interacts (via C-terminus) with F-box protein fsn-1 (via SPRY domain); the interaction results in egl-3 proteasomal degradation. Post-translationally, ubiquitinated. As to expression, expressed in head and tail ganglia. Expressed in neurons including mechanosensory and motor neurons, and interneurons (at protein level). Expressed in the nerve ring, ventral nerve cord and intestine.

The protein localises to the cell projection. It localises to the axon. Its subcellular location is the cytoplasmic vesicle. It is found in the secretory vesicle lumen. The protein resides in the secreted. It catalyses the reaction Release of protein hormones and neuropeptides from their precursors, generally by hydrolysis of -Lys-Arg-|- bonds.. Serine endoprotease which cleaves preproteins at paired basic amino acids. Processes FMRFamide-like (flp) and neuropeptide-like protein (nlp) neuropeptides. Probably by processing flp-1 and flp-18, modulates the neuronal excitation-inhibition balance and thus the level of activity of the locomotor circuit. Regulates sensitivity to mechanosensory stimuli. By processing neuropeptides, modulates basal acetylcholine release at the ventral cord neuromuscular junctions. Probably by processing flp neuropeptides, regulates the turning step of male mating behavior. Cleaves pro-insulin-like proteins ins-3, ins-4 and ins-6 into their mature active forms. Together with convertase kpc-1, cleaves pro-insulin-like protein ins-18. By controlling ins-4 and ins-6 processing and thus the activation of the daf-2/InsR pathway, negatively modulates synapse development and synaptic transmission at neuromuscular junctions. Similarly, by controlling ins-4 and ins-6 processing, negatively regulates dauer formation under optimal environmental conditions. Under adverse environmental conditions, may promote dauer formation by processing ins-18, a daf-2/InsR antagonist. May cleave dense-core vesicle membrane protein ida-1. Involved in egg-laying, fat storage and locomotion. In Caenorhabditis elegans, this protein is Neuroendocrine convertase 2.